A 506-amino-acid polypeptide reads, in one-letter code: 2-isopropylmalate synthase (506 aa).

One can recognise a Pyruvate carboxyltransferase domain in the interval 4–266 (ILFMDTTLRD…EPSMTLKEIK (263 aa)). Positions 13, 201, 203, and 237 each coordinate Mn(2+). Positions 390-506 (NITQLQVHFV…KLKSFIQLVK (117 aa)) are regulatory domain.

The protein belongs to the alpha-IPM synthase/homocitrate synthase family. LeuA type 1 subfamily. As to quaternary structure, homodimer. It depends on Mn(2+) as a cofactor.

It localises to the cytoplasm. It catalyses the reaction 3-methyl-2-oxobutanoate + acetyl-CoA + H2O = (2S)-2-isopropylmalate + CoA + H(+). Its pathway is amino-acid biosynthesis; L-leucine biosynthesis; L-leucine from 3-methyl-2-oxobutanoate: step 1/4. Functionally, catalyzes the condensation of the acetyl group of acetyl-CoA with 3-methyl-2-oxobutanoate (2-ketoisovalerate) to form 3-carboxy-3-hydroxy-4-methylpentanoate (2-isopropylmalate). The chain is 2-isopropylmalate synthase from Bacillus cereus (strain ATCC 10987 / NRS 248).